Consider the following 780-residue polypeptide: B3 domain-containing transcription repressor VAL2 (780 aa).

Residues 286–387 constitute a DNA-binding region (TF-B3); it reads FEKVLSASDA…KLVMGYRKAT (102 aa). The segment at 515–565 adopts a CW-type zinc-finger fold; that stretch reads TGEQEQWVQCDACGKWRQLPVDILLPPKWSCSDNLLDPGRSSCSAPDELSP. Positions 524, 527, 545, and 557 each coordinate Zn(2+). Disordered regions lie at residues 577–608, 669–695, and 743–780; these read EFKRRRLASSNEKLNQSQDASALNSLGNAGIT, KRNKGEAGQASQQAQSQSECRDETEVE, and NTAGEQQSSDMVSTEHGSSSAAQETEKDTTNGAHDPVN. The span at 584–603 shows a compositional bias: polar residues; the sequence is ASSNEKLNQSQDASALNSLG. Low complexity predominate over residues 674–686; it reads EAGQASQQAQSQS. Over residues 743–765 the composition is skewed to polar residues; that stretch reads NTAGEQQSSDMVSTEHGSSSAAQ.

The protein localises to the nucleus. Transcriptional repressor of gene expression involved in embryonic pathways, such as LEC1, ABI3, and FUS3. Repressor of the sugar-inducible genes involved in the seed maturation program in seedlings. Plays an essential role in regulating the transition from seed maturation to seedling growth. Functionally redundant with VAL1/HSI2. This Arabidopsis thaliana (Mouse-ear cress) protein is B3 domain-containing transcription repressor VAL2 (VAL2).